Reading from the N-terminus, the 59-residue chain is Large ribosomal subunit protein bL32 (59 aa).

The protein belongs to the bacterial ribosomal protein bL32 family.

The chain is Large ribosomal subunit protein bL32 from Mesoplasma florum (strain ATCC 33453 / NBRC 100688 / NCTC 11704 / L1) (Acholeplasma florum).